Consider the following 706-residue polypeptide: Ribosomal RNA large subunit methyltransferase K/L (706 aa).

One can recognise a THUMP domain in the interval 43 to 154 (LMYQSLLWSR…RDMASVALDL (112 aa)).

The protein belongs to the methyltransferase superfamily. RlmKL family.

It is found in the cytoplasm. The enzyme catalyses guanosine(2445) in 23S rRNA + S-adenosyl-L-methionine = N(2)-methylguanosine(2445) in 23S rRNA + S-adenosyl-L-homocysteine + H(+). It catalyses the reaction guanosine(2069) in 23S rRNA + S-adenosyl-L-methionine = N(2)-methylguanosine(2069) in 23S rRNA + S-adenosyl-L-homocysteine + H(+). In terms of biological role, specifically methylates the guanine in position 2445 (m2G2445) and the guanine in position 2069 (m7G2069) of 23S rRNA. The chain is Ribosomal RNA large subunit methyltransferase K/L from Yersinia pestis bv. Antiqua (strain Antiqua).